A 219-amino-acid chain; its full sequence is 7-cyano-7-deazaguanine synthase (219 aa).

Position 10–20 (10–20 (FSGGQDSTTCL)) interacts with ATP. Zn(2+) is bound by residues cysteine 188, cysteine 197, cysteine 200, and cysteine 203.

Belongs to the QueC family. It depends on Zn(2+) as a cofactor.

The catalysed reaction is 7-carboxy-7-deazaguanine + NH4(+) + ATP = 7-cyano-7-deazaguanine + ADP + phosphate + H2O + H(+). The protein operates within purine metabolism; 7-cyano-7-deazaguanine biosynthesis. Catalyzes the ATP-dependent conversion of 7-carboxy-7-deazaguanine (CDG) to 7-cyano-7-deazaguanine (preQ(0)). The chain is 7-cyano-7-deazaguanine synthase from Bacteroides fragilis (strain ATCC 25285 / DSM 2151 / CCUG 4856 / JCM 11019 / LMG 10263 / NCTC 9343 / Onslow / VPI 2553 / EN-2).